An 87-amino-acid chain; its full sequence is Small ribosomal subunit protein uS15c (87 aa).

It belongs to the universal ribosomal protein uS15 family. Part of the 30S ribosomal subunit.

It localises to the plastid. It is found in the chloroplast. This is Small ribosomal subunit protein uS15c (rps15) from Nymphaea alba (White water-lily).